We begin with the raw amino-acid sequence, 483 residues long: UDP-N-acetylmuramoyl-L-alanyl-D-glutamate--2,6-diaminopimelate ligase (483 aa).

Ser29 contacts UDP-N-acetyl-alpha-D-muramoyl-L-alanyl-D-glutamate. 112 to 118 (GTNGKTT) lines the ATP pocket. UDP-N-acetyl-alpha-D-muramoyl-L-alanyl-D-glutamate contacts are provided by residues 154–155 (TT), Ser181, and Arg189. N6-carboxylysine is present on Lys221. Residues Arg380, 404-407 (DNPR), Gly454, and Glu458 each bind meso-2,6-diaminopimelate. Positions 404-407 (DNPR) match the Meso-diaminopimelate recognition motif motif.

The protein belongs to the MurCDEF family. MurE subfamily. Mg(2+) serves as cofactor. Post-translationally, carboxylation is probably crucial for Mg(2+) binding and, consequently, for the gamma-phosphate positioning of ATP.

It is found in the cytoplasm. It catalyses the reaction UDP-N-acetyl-alpha-D-muramoyl-L-alanyl-D-glutamate + meso-2,6-diaminopimelate + ATP = UDP-N-acetyl-alpha-D-muramoyl-L-alanyl-gamma-D-glutamyl-meso-2,6-diaminopimelate + ADP + phosphate + H(+). It functions in the pathway cell wall biogenesis; peptidoglycan biosynthesis. Its function is as follows. Catalyzes the addition of meso-diaminopimelic acid to the nucleotide precursor UDP-N-acetylmuramoyl-L-alanyl-D-glutamate (UMAG) in the biosynthesis of bacterial cell-wall peptidoglycan. The sequence is that of UDP-N-acetylmuramoyl-L-alanyl-D-glutamate--2,6-diaminopimelate ligase from Clostridium botulinum (strain ATCC 19397 / Type A).